Reading from the N-terminus, the 215-residue chain is UPF0502 protein YceH (215 aa).

It belongs to the UPF0502 family.

The sequence is that of UPF0502 protein YceH from Salmonella arizonae (strain ATCC BAA-731 / CDC346-86 / RSK2980).